The primary structure comprises 147 residues: Hemoglobin larval subunit beta-1 (147 aa).

A Globin domain is found at His-3–Phe-147. The heme b site is built by His-64 and His-93.

It belongs to the globin family. In terms of assembly, heterotetramer of two alpha chains and two beta chains. Red blood cells.

This is a larval (tadpole) beta-globin. This is Hemoglobin larval subunit beta-1 from Xenopus laevis (African clawed frog).